We begin with the raw amino-acid sequence, 248 residues long: Inhibitor of growth protein 4 (248 aa).

Positions 25–118 (FQLMRDLDQR…ADLKEKQIES (94 aa)) form a coiled coil. Residues K112, K127, and K129 each carry the N6-acetyllysine modification. The interval 115-160 (QIESSDYDSSSSKGKKSRTQKEKKAARARSKGKNSDEEAPKAAQKK) is disordered. Residues 127 to 147 (KGKKSRTQKEKKAARARSKGK) carry the Bipartite nuclear localization signal motif. R132 carries the post-translational modification Citrulline. N6-acetyllysine occurs at positions 145, 147, and 155. R165 bears the Citrulline mark. The segment at 195–244 (PTYCLCHQVSYGEMIGCDNPDCSIERFHFACVGLTTKPRGKWFCPRCSQE) adopts a PHD-type zinc-finger fold. Zn(2+) is bound by residues C198, C200, C211, C216, H222, C225, C238, and C241.

The protein belongs to the ING family. Homodimer. Component of the HBO1 complex composed of KAT7/HBO1, MEAF6, ING4 or ING5, and one scaffold subunit: complexes containing BRPF scaffold (BRPF1, BRD1/BRPF2 or BRPF3) direct KAT7/HBO1 specificity towards H3K14ac, while complexes containing JADE scaffold (JADE1, JADE2 and JADE3) mediate acetylation of histone H4. Interacts with H3K4me3 and to a lesser extent with H3K4me2, the interaction augments KAT7/HBO1 acetylation activity on H3 tails. Interacts with EP300, RELA and TP53; these interactions may be indirect. Interacts with EGLN1. Interacts with BCL2A1. Citrullination by PADI4 within the nuclear localization signal disrupts the interaction with p53 and increases susceptibility to degradation.

Its subcellular location is the nucleus. Functionally, component of HBO1 complexes, which specifically mediate acetylation of histone H3 at 'Lys-14' (H3K14ac), and have reduced activity toward histone H4. Through chromatin acetylation it may function in DNA replication. May inhibit tumor progression by modulating the transcriptional output of signaling pathways which regulate cell proliferation. Can suppress brain tumor angiogenesis through transcriptional repression of RELA/NFKB3 target genes when complexed with RELA. May also specifically suppress loss of contact inhibition elicited by activated oncogenes such as MYC. Represses hypoxia inducible factor's (HIF) activity by interacting with HIF prolyl hydroxylase 2 (EGLN1). Can enhance apoptosis induced by serum starvation in mammary epithelial cell line HC11. This is Inhibitor of growth protein 4 (ING4) from Bos taurus (Bovine).